The sequence spans 232 residues: MSIPLLKYSLSTQNQRVDGYEVSPGEEQPRAYNTDNLPSAVEMDEVIWAAYRQIFSEHQILSSTSDSNLESQLRFNQIRIKDFIRGLILSESFRKLNYDVNNNYRFVEICVQRILGRDVYNEREKLAWSVVIASKGLESFVNMLLDSDEYEENFGDSIVPYQRRRIIAQRSKGEMPFNLKTPRYGADFKEKFGMPQFIWQGPVRQFRPQEQRPKAGDPALFLGMVNDLALFK.

Positions 11 to 191 (STQNQRVDGY…PRYGADFKEK (181 aa)) constitute a PBS-linker domain.

The protein belongs to the phycobilisome linker protein family. In terms of assembly, the phycobilisome is a hemidiscoidal structure that is composed of two distinct substructures: a core complex and a number of rods radiating from the core.

It is found in the plastid. Its subcellular location is the chloroplast. The protein resides in the chloroplast thylakoid membrane. In terms of biological role, rod-core linker protein required for attachment of phycocyanin to allophycocyanin in cores of phycobilisomes. Functionally, linker polypeptides determine the state of aggregation and the location of the disk-shaped phycobiliprotein units within the phycobilisome and modulate their spectroscopic properties in order to mediate a directed and optimal energy transfer. This is Phycobilisome rod-core linker polypeptide cpcG (cpcG) from Pyropia yezoensis (Susabi-nori).